The primary structure comprises 426 residues: Trigger factor (426 aa).

Positions glycine 160–proline 240 constitute a PPIase FKBP-type domain.

It belongs to the FKBP-type PPIase family. Tig subfamily.

The protein localises to the cytoplasm. It carries out the reaction [protein]-peptidylproline (omega=180) = [protein]-peptidylproline (omega=0). Involved in protein export. Acts as a chaperone by maintaining the newly synthesized protein in an open conformation. Functions as a peptidyl-prolyl cis-trans isomerase. This Chlorobaculum tepidum (strain ATCC 49652 / DSM 12025 / NBRC 103806 / TLS) (Chlorobium tepidum) protein is Trigger factor.